The primary structure comprises 669 residues: DNA ligase (669 aa).

Residues 34–38, 83–84, and Glu114 contribute to the NAD(+) site; these read DAEYD and SL. Lys116 functions as the N6-AMP-lysine intermediate in the catalytic mechanism. The NAD(+) site is built by Arg137, Glu171, Lys287, and Lys311. Residues Cys405, Cys408, Cys423, and Cys428 each coordinate Zn(2+). A BRCT domain is found at 591-669; it reads NVESYFAGKT…EERFLQELNK (79 aa).

This sequence belongs to the NAD-dependent DNA ligase family. LigA subfamily. The cofactor is Mg(2+). It depends on Mn(2+) as a cofactor.

It carries out the reaction NAD(+) + (deoxyribonucleotide)n-3'-hydroxyl + 5'-phospho-(deoxyribonucleotide)m = (deoxyribonucleotide)n+m + AMP + beta-nicotinamide D-nucleotide.. Its function is as follows. DNA ligase that catalyzes the formation of phosphodiester linkages between 5'-phosphoryl and 3'-hydroxyl groups in double-stranded DNA using NAD as a coenzyme and as the energy source for the reaction. It is essential for DNA replication and repair of damaged DNA. The sequence is that of DNA ligase from Bacillus cereus (strain ZK / E33L).